The sequence spans 194 residues: Isopentenyl-diphosphate Delta-isomerase (194 aa).

Mn(2+)-binding residues include His23 and His30. The 135-residue stretch at 28–162 folds into the Nudix hydrolase domain; that stretch reads PLHLAFSCYV…TTDISPWCRQ (135 aa). The active site involves Cys65. Residue His67 coordinates Mn(2+). Residue Glu85 participates in Mg(2+) binding. Mn(2+)-binding residues include Glu112 and Glu114. The active site involves Glu114.

The protein belongs to the IPP isomerase type 1 family. Requires Mg(2+) as cofactor. Mn(2+) is required as a cofactor.

The protein localises to the cytoplasm. It catalyses the reaction isopentenyl diphosphate = dimethylallyl diphosphate. The protein operates within isoprenoid biosynthesis; dimethylallyl diphosphate biosynthesis; dimethylallyl diphosphate from isopentenyl diphosphate: step 1/1. Functionally, catalyzes the 1,3-allylic rearrangement of the homoallylic substrate isopentenyl (IPP) to its highly electrophilic allylic isomer, dimethylallyl diphosphate (DMAPP). The sequence is that of Isopentenyl-diphosphate Delta-isomerase from Saccharopolyspora erythraea (strain ATCC 11635 / DSM 40517 / JCM 4748 / NBRC 13426 / NCIMB 8594 / NRRL 2338).